The chain runs to 435 residues: Histidine--tRNA ligase (435 aa).

It belongs to the class-II aminoacyl-tRNA synthetase family.

It is found in the cytoplasm. It carries out the reaction tRNA(His) + L-histidine + ATP = L-histidyl-tRNA(His) + AMP + diphosphate + H(+). This is Histidine--tRNA ligase (hisS) from Aeropyrum pernix (strain ATCC 700893 / DSM 11879 / JCM 9820 / NBRC 100138 / K1).